The primary structure comprises 291 residues: Tyrosine recombinase XerD (291 aa).

The 82-residue stretch at 1–82 (MEEGLIDRLL…ACKRLYIWME (82 aa)) folds into the Core-binding (CB) domain. The Tyr recombinase domain occupies 103 to 285 (NIPTLITEQQ…ANVWLQGVVK (183 aa)). Residues Arg143, Lys167, His237, Arg240, and His263 contribute to the active site. The active-site O-(3'-phospho-DNA)-tyrosine intermediate is Tyr272.

This sequence belongs to the 'phage' integrase family. XerD subfamily. As to quaternary structure, forms a cyclic heterotetrameric complex composed of two molecules of XerC and two molecules of XerD.

The protein resides in the cytoplasm. In terms of biological role, site-specific tyrosine recombinase, which acts by catalyzing the cutting and rejoining of the recombining DNA molecules. The XerC-XerD complex is essential to convert dimers of the bacterial chromosome into monomers to permit their segregation at cell division. It also contributes to the segregational stability of plasmids. This Neisseria meningitidis serogroup B (strain ATCC BAA-335 / MC58) protein is Tyrosine recombinase XerD.